We begin with the raw amino-acid sequence, 160 residues long: SsrA-binding protein (160 aa).

This sequence belongs to the SmpB family.

It is found in the cytoplasm. Functionally, required for rescue of stalled ribosomes mediated by trans-translation. Binds to transfer-messenger RNA (tmRNA), required for stable association of tmRNA with ribosomes. tmRNA and SmpB together mimic tRNA shape, replacing the anticodon stem-loop with SmpB. tmRNA is encoded by the ssrA gene; the 2 termini fold to resemble tRNA(Ala) and it encodes a 'tag peptide', a short internal open reading frame. During trans-translation Ala-aminoacylated tmRNA acts like a tRNA, entering the A-site of stalled ribosomes, displacing the stalled mRNA. The ribosome then switches to translate the ORF on the tmRNA; the nascent peptide is terminated with the 'tag peptide' encoded by the tmRNA and targeted for degradation. The ribosome is freed to recommence translation, which seems to be the essential function of trans-translation. This is SsrA-binding protein from Pasteurella multocida (strain Pm70).